A 33-amino-acid polypeptide reads, in one-letter code: Cytochrome b6-f complex subunit 8 (33 aa).

A helical transmembrane segment spans residues 2 to 22; the sequence is LFTFAWASLAAIFTFSIAMVV.

Belongs to the PetN family. The 4 large subunits of the cytochrome b6-f complex are cytochrome b6, subunit IV (17 kDa polypeptide, PetD), cytochrome f and the Rieske protein, while the 4 small subunits are PetG, PetL, PetM and PetN. The complex functions as a dimer.

The protein localises to the cellular thylakoid membrane. Its function is as follows. Component of the cytochrome b6-f complex, which mediates electron transfer between photosystem II (PSII) and photosystem I (PSI), cyclic electron flow around PSI, and state transitions. The chain is Cytochrome b6-f complex subunit 8 from Prochlorococcus marinus (strain SARG / CCMP1375 / SS120).